The following is a 520-amino-acid chain: Chaperone Ric-8B (520 aa).

Residue serine 468 is modified to Phosphoserine. Threonine 473 carries the phosphothreonine modification.

Belongs to the synembryn family. As to quaternary structure, interacts with GDP-bound G(s) G-alpha proteins GNAL and GNAS. Does not interact with G-alpha proteins when they are in complex with subunits beta and gamma. In terms of tissue distribution, predominantly expressed in the mature olfactory sensory neurons and also in a few regions in the brain.

It localises to the cytoplasm. It is found in the cell cortex. In terms of biological role, chaperone that specifically binds and folds nascent G(s) G-alpha proteins (GNAS and GNAL) prior to G protein heterotrimer formation, promoting their association with the plasma membrane. Also acts as a guanine nucleotide exchange factor (GEF) for G(s) proteins by stimulating exchange of bound GDP for free GTP. Acts as an important component for odorant signal transduction by mediating GNAL (G(olf)-alpha) folding, thereby promoting-dependent cAMP accumulation in olfactory sensory neurons. The polypeptide is Chaperone Ric-8B (Mus musculus (Mouse)).